The following is an 80-amino-acid chain: Acyl carrier protein (80 aa).

One can recognise a Carrier domain in the interval 1–79 (MSQEEILQKV…DAVKFIEAKK (79 aa)). An O-(pantetheine 4'-phosphoryl)serine modification is found at Ser-39.

Belongs to the acyl carrier protein (ACP) family. In terms of processing, 4'-phosphopantetheine is transferred from CoA to a specific serine of apo-ACP by AcpS. This modification is essential for activity because fatty acids are bound in thioester linkage to the sulfhydryl of the prosthetic group.

Its subcellular location is the cytoplasm. The protein operates within lipid metabolism; fatty acid biosynthesis. Functionally, carrier of the growing fatty acid chain in fatty acid biosynthesis. The protein is Acyl carrier protein of Prochlorococcus marinus (strain MIT 9515).